Here is a 269-residue protein sequence, read N- to C-terminus: MEMO1 family protein TV1383 (269 aa).

This sequence belongs to the MEMO1 family.

In Thermoplasma volcanium (strain ATCC 51530 / DSM 4299 / JCM 9571 / NBRC 15438 / GSS1), this protein is MEMO1 family protein TV1383.